A 383-amino-acid polypeptide reads, in one-letter code: ATP phosphoribosyltransferase regulatory subunit (383 aa).

Belongs to the class-II aminoacyl-tRNA synthetase family. HisZ subfamily. In terms of assembly, heteromultimer composed of HisG and HisZ subunits.

The protein localises to the cytoplasm. It functions in the pathway amino-acid biosynthesis; L-histidine biosynthesis; L-histidine from 5-phospho-alpha-D-ribose 1-diphosphate: step 1/9. In terms of biological role, required for the first step of histidine biosynthesis. May allow the feedback regulation of ATP phosphoribosyltransferase activity by histidine. The protein is ATP phosphoribosyltransferase regulatory subunit of Cupriavidus taiwanensis (strain DSM 17343 / BCRC 17206 / CCUG 44338 / CIP 107171 / LMG 19424 / R1) (Ralstonia taiwanensis (strain LMG 19424)).